The sequence spans 37 residues: Cytochrome b6-f complex subunit 5 (37 aa).

The helical transmembrane segment at 5–25 threads the bilayer; the sequence is LLCGIVLGLIPVTLAGLFFAA.

The protein belongs to the PetG family. As to quaternary structure, the 4 large subunits of the cytochrome b6-f complex are cytochrome b6, subunit IV (17 kDa polypeptide, PetD), cytochrome f and the Rieske protein, while the 4 small subunits are PetG, PetL, PetM and PetN. The complex functions as a dimer.

It localises to the cellular thylakoid membrane. Its function is as follows. Component of the cytochrome b6-f complex, which mediates electron transfer between photosystem II (PSII) and photosystem I (PSI), cyclic electron flow around PSI, and state transitions. PetG is required for either the stability or assembly of the cytochrome b6-f complex. This chain is Cytochrome b6-f complex subunit 5, found in Thermosynechococcus vestitus (strain NIES-2133 / IAM M-273 / BP-1).